A 114-amino-acid polypeptide reads, in one-letter code: MNLIESINAAQLRTDIPDFRPGDTVRVHAKVVEGTRERIQIFEGVVIARKNSGINETYTVRKISNGVGVERIFPVHTPRVEKIEVIRHGKVRRAKLYYLRALTGKKARIAERRR.

Belongs to the bacterial ribosomal protein bL19 family.

This protein is located at the 30S-50S ribosomal subunit interface and may play a role in the structure and function of the aminoacyl-tRNA binding site. The sequence is that of Large ribosomal subunit protein bL19 from Lactococcus lactis subsp. cremoris (strain MG1363).